A 354-amino-acid polypeptide reads, in one-letter code: Ornithine transcarbamylase, mitochondrial (354 aa).

The N-terminal 32 residues, 1–32 (MLFHLRTLLNNAALRNGHNFVVRNFRCGQPLQ), are a transit peptide targeting the mitochondrion. Lys70 is subject to N6-acetyllysine; alternate. The residue at position 70 (Lys70) is an N6-succinyllysine; alternate. N6-succinyllysine is present on Lys80. Lys88 carries the post-translational modification N6-acetyllysine; alternate. Lys88 carries the post-translational modification N6-succinyllysine; alternate. Phosphoserine is present on Ser133. N6-acetyllysine; alternate occurs at positions 144, 221, 231, and 238. N6-succinyllysine; alternate is present on residues Lys144, Lys221, Lys231, and Lys238. Lys243 carries the post-translational modification N6-acetyllysine. Asp263 is a catalytic residue. Lys274 and Lys289 each carry N6-succinyllysine. Lys292 bears the N6-acetyllysine; alternate mark. The residue at position 292 (Lys292) is an N6-succinyllysine; alternate. Cys303 is an active-site residue. Lys307 is modified (N6-acetyllysine; alternate). An N6-succinyllysine; alternate modification is found at Lys307.

It belongs to the aspartate/ornithine carbamoyltransferase superfamily. OTCase family. As to quaternary structure, homotrimer. In terms of processing, acetylation at Lys-88 negatively regulates ornithine carbamoyltransferase activity in response to nutrient signals.

Its subcellular location is the mitochondrion matrix. It carries out the reaction carbamoyl phosphate + L-ornithine = L-citrulline + phosphate + H(+). It participates in nitrogen metabolism; urea cycle; L-citrulline from L-ornithine and carbamoyl phosphate: step 1/1. Its activity is regulated as follows. Negatively regulated by lysine acetylation. Its function is as follows. Catalyzes the second step of the urea cycle, the condensation of carbamoyl phosphate with L-ornithine to form L-citrulline. The urea cycle ensures the detoxification of ammonia by converting it to urea for excretion. This Bos taurus (Bovine) protein is Ornithine transcarbamylase, mitochondrial.